A 297-amino-acid polypeptide reads, in one-letter code: uncharacterized protein (297 aa).

The interval Val-175–Lys-199 is disordered. The span at Leu-176–Arg-185 shows a compositional bias: polar residues. An N-linked (GlcNAc...) asparagine; by host glycan is attached at Asn-269. The chain crosses the membrane as a helical span at residues Leu-277 to Leu-297.

This sequence belongs to the ascovirus HvAV ORF18 family.

The protein resides in the membrane. This is an uncharacterized protein from Noctuidae (owlet moths).